The chain runs to 464 residues: Maturase K (464 aa).

Belongs to the intron maturase 2 family. MatK subfamily.

The protein resides in the plastid. The protein localises to the chloroplast. Functionally, usually encoded in the trnK tRNA gene intron. Probably assists in splicing its own and other chloroplast group II introns. This is Maturase K from Castanea crenata (Japanese chestnut).